The sequence spans 330 residues: Small ribosomal subunit protein uS2 (330 aa).

The protein belongs to the universal ribosomal protein uS2 family.

The sequence is that of Small ribosomal subunit protein uS2 from Rhodopseudomonas palustris (strain BisA53).